The primary structure comprises 344 residues: Cyanuric acid amidohydrolase (344 aa).

The interval 1–91 (MTVVDIVKRT…ASAFVGTDRP (91 aa)) is RU A. Substrate is bound by residues Arg51 and 71 to 72 (SG). The tract at residues 97-232 (ALVAAVGRTA…CHILVLGNSP (136 aa)) is RU B. Lys146 is a catalytic residue. Substrate contacts are provided by residues Arg178 and 215–216 (SS). The active-site Nucleophile is Ser215. The interval 238–344 (LRAVHGVMRD…PVTVVYRVAS (107 aa)) is RU C. Glu276 lines the Mg(2+) pocket. Substrate-binding positions include Arg303 and 322 to 323 (SG). Mg(2+)-binding residues include Ala325, Gln328, Gly329, Pro330, and Gly333.

Belongs to the cyclic amide hydrolase (CyAH) family. Homotetramer.

The enzyme catalyses cyanurate + H2O = 1-carboxybiuret + H(+). It participates in xenobiotic degradation; atrazine degradation; biuret from cyanurate: step 1/1. Its activity is regulated as follows. Inhibited by barbituric acid. In terms of biological role, responsible for the hydrolysis of cyanuric acid, an intermediate formed during catabolism of s-triazine based compounds in herbicides such as atrazine and polymers such as melamine. Catalyzes the hydrolytic opening of the s-triazine ring of cyanuric acid (2,4,6-trihydroxy-s-triazine) to yield carbon dioxide and carboxybiuret, which spontaneously decarboxylates to biuret. This chain is Cyanuric acid amidohydrolase, found in Pseudonocardia dioxanivorans (strain ATCC 55486 / DSM 44775 / JCM 13855 / CB1190).